Here is a 142-residue protein sequence, read N- to C-terminus: Nucleoside diphosphate kinase (142 aa).

The ATP site is built by K11, F59, R87, T93, R104, and N114. H117 functions as the Pros-phosphohistidine intermediate in the catalytic mechanism.

The protein belongs to the NDK family. Homotetramer. The cofactor is Mg(2+).

The protein resides in the cytoplasm. It carries out the reaction a 2'-deoxyribonucleoside 5'-diphosphate + ATP = a 2'-deoxyribonucleoside 5'-triphosphate + ADP. It catalyses the reaction a ribonucleoside 5'-diphosphate + ATP = a ribonucleoside 5'-triphosphate + ADP. Major role in the synthesis of nucleoside triphosphates other than ATP. The ATP gamma phosphate is transferred to the NDP beta phosphate via a ping-pong mechanism, using a phosphorylated active-site intermediate. The protein is Nucleoside diphosphate kinase of Yersinia pseudotuberculosis serotype O:1b (strain IP 31758).